Reading from the N-terminus, the 287-residue chain is MTPRTITVDTVRFGNHLPMTLIAGPCVIEGLEFALRTAEALKQICEGVGVELVYKSSFDKANRTSEGSFRGPGMEAGLRILERVRREVGVPVITDVHEADQCVAVAEVVDMLQTPAFLCRQTDFIQAAARPGKPVNIKKGQFLAPQDMARVAAKAAATGNENILLCERGFSFGYQNLVVDMRGLSIMAQSGYPVIFDATHSVQQPGALGGASGGDRRFVSDLARAAVAVGVAGVFMEVHPDPDHAPCDGPNMLPMAHLSPLLDQLKALDRIRKEAMALESGLSLGDA.

This sequence belongs to the KdsA family.

It localises to the cytoplasm. It catalyses the reaction D-arabinose 5-phosphate + phosphoenolpyruvate + H2O = 3-deoxy-alpha-D-manno-2-octulosonate-8-phosphate + phosphate. It functions in the pathway carbohydrate biosynthesis; 3-deoxy-D-manno-octulosonate biosynthesis; 3-deoxy-D-manno-octulosonate from D-ribulose 5-phosphate: step 2/3. The protein operates within bacterial outer membrane biogenesis; lipopolysaccharide biosynthesis. This Magnetococcus marinus (strain ATCC BAA-1437 / JCM 17883 / MC-1) protein is 2-dehydro-3-deoxyphosphooctonate aldolase.